The following is a 250-amino-acid chain: 2,5-dichloro-2,5-cyclohexadiene-1,4-diol dehydrogenase (250 aa).

9-34 (IIVTGGGSGIGRATVELLVASGANVA) is an NAD(+) binding site. Position 141 (Ser141) interacts with substrate. Tyr154 acts as the Proton acceptor in catalysis.

The protein belongs to the short-chain dehydrogenases/reductases (SDR) family.

It catalyses the reaction 2,5-dichlorocyclohexa-2,5-dien-1,4-diol + NAD(+) = 2,5-dichlorohydroquinone + NADH + H(+). It functions in the pathway xenobiotic degradation; gamma-hexachlorocyclohexane degradation. Its function is as follows. Catalyzes the dehydrogenation of 2,5-dichloro-2,5-cyclohexadiene-1,4-diol (2,5-DDOL) to 2,5-dichlorohydroquinone (2,5-DCHQ), a step in the degradation of gamma-hexachlorocyclohexane (gamma-HCH or lindane). Has an essential role in this assimilation pathway that allows S.japonicum UT26 to grow on gamma-HCH as the sole source of carbon and energy. The chain is 2,5-dichloro-2,5-cyclohexadiene-1,4-diol dehydrogenase from Sphingobium indicum (strain DSM 16413 / CCM 7287 / MTCC 6362 / UT26 / NBRC 101211 / UT26S) (Sphingobium japonicum).